Here is a 157-residue protein sequence, read N- to C-terminus: MSLIPSIFGGRRTNVFDPFSLDVFDPFEGFLTPSGLANAPAMDVAAFTNAKVDWRETPEAHVFKADLPGLRKEEVKVEVEDGNILQISGERSNENEEKNDKWHRVERSSGKFTRRFRLPENAKMEEIKASMENGVLSVTVPKVPEKKPEVKSIDISG.

Positions 43 to 157 (DVAAFTNAKV…PEVKSIDISG (115 aa)) constitute a sHSP domain.

The protein belongs to the small heat shock protein (HSP20) family. As to quaternary structure, may form oligomeric structures.

The protein resides in the cytoplasm. This chain is 17.6 kDa class I heat shock protein 3 (HSP17.6C), found in Arabidopsis thaliana (Mouse-ear cress).